Consider the following 264-residue polypeptide: ATP synthase subunit a (264 aa).

6 helical membrane-spanning segments follow: residues 29 to 49 (TWHI…LWLF), 89 to 109 (VIAP…FMDM), 134 to 154 (DLNI…YYSI), 177 to 197 (IPVN…SLAL), 208 to 228 (LIFI…TLGV), and 235 to 255 (LIFH…LTIV).

The protein belongs to the ATPase A chain family. In terms of assembly, F-type ATPases have 2 components, CF(1) - the catalytic core - and CF(0) - the membrane proton channel. CF(1) has five subunits: alpha(3), beta(3), gamma(1), delta(1), epsilon(1). CF(0) has three main subunits: a(1), b(2) and c(9-12). The alpha and beta chains form an alternating ring which encloses part of the gamma chain. CF(1) is attached to CF(0) by a central stalk formed by the gamma and epsilon chains, while a peripheral stalk is formed by the delta and b chains.

Its subcellular location is the cell inner membrane. Key component of the proton channel; it plays a direct role in the translocation of protons across the membrane. This Shewanella woodyi (strain ATCC 51908 / MS32) protein is ATP synthase subunit a.